Consider the following 44-residue polypeptide: Photosystem I reaction center subunit IX (44 aa).

The helical transmembrane segment at 7 to 27 threads the bilayer; the sequence is YLSVAPVLTTLWFGSLAGLLI.

The protein belongs to the PsaJ family.

The protein localises to the plastid. It is found in the chloroplast thylakoid membrane. May help in the organization of the PsaE and PsaF subunits. The chain is Photosystem I reaction center subunit IX from Drimys granadensis.